The chain runs to 354 residues: ATP-dependent (S)-NAD(P)H-hydrate dehydratase (354 aa).

The YjeF C-terminal domain maps to 42–350; it reads AENILRAITP…ECLGRSLEDI (309 aa). (6S)-NADPHX contacts are provided by residues Gly-155 and 208-214; that span reads NVNEYKR. Residues 248-252 and 267-276 contribute to the ATP site; these read KGKSD and GSPRRCGGQG. Residue Asp-277 coordinates (6S)-NADPHX.

Belongs to the NnrD/CARKD family. Mg(2+) serves as cofactor.

It carries out the reaction (6S)-NADHX + ATP = ADP + phosphate + NADH + H(+). The catalysed reaction is (6S)-NADPHX + ATP = ADP + phosphate + NADPH + H(+). Functionally, catalyzes the dehydration of the S-form of NAD(P)HX at the expense of ATP, which is converted to ADP. Together with NAD(P)HX epimerase, which catalyzes the epimerization of the S- and R-forms, the enzyme allows the repair of both epimers of NAD(P)HX, a damaged form of NAD(P)H that is a result of enzymatic or heat-dependent hydration. In Vitis vinifera (Grape), this protein is ATP-dependent (S)-NAD(P)H-hydrate dehydratase.